The following is a 215-amino-acid chain: Eukaryotic translation initiation factor 4E-1A (215 aa).

The span at 1-14 (MATAEPETSTNPSN) shows a compositional bias: low complexity. The interval 1 to 23 (MATAEPETSTNPSNSEEKNEENE) is disordered. MRNA-binding positions include 54–55 (WQ), 100–101 (WE), 155–160 (RTKGDK), and 203–205 (TKS).

It belongs to the eukaryotic initiation factor 4E family. Interacts with eif4ebp3l. Expressed in all tissues examined, including gill, fin, heart, intestine, muscle, ovary and testis.

It localises to the cytoplasm. Its subcellular location is the nucleus. Functionally, recognizes and binds the 7-methylguanosine (m7G)-containing mRNA cap during an early step in the initiation of protein synthesis and facilitates ribosome binding by inducing the unwinding of the mRNAs secondary structures. Also promotes export of a subset of mRNAs from the nucleus to the cytoplasm. In Danio rerio (Zebrafish), this protein is Eukaryotic translation initiation factor 4E-1A.